A 101-amino-acid polypeptide reads, in one-letter code: Large ribosomal subunit protein uL23 (101 aa).

Belongs to the universal ribosomal protein uL23 family. Part of the 50S ribosomal subunit. Contacts protein L29, and trigger factor when it is bound to the ribosome.

One of the early assembly proteins it binds 23S rRNA. One of the proteins that surrounds the polypeptide exit tunnel on the outside of the ribosome. Forms the main docking site for trigger factor binding to the ribosome. This is Large ribosomal subunit protein uL23 from Nocardia farcinica (strain IFM 10152).